A 121-amino-acid polypeptide reads, in one-letter code: UPF0295 protein BH0952 (121 aa).

2 helical membrane passes run Ile12 to Phe32 and Val41 to Ile61.

It belongs to the UPF0295 family.

The protein resides in the cell membrane. This chain is UPF0295 protein BH0952, found in Halalkalibacterium halodurans (strain ATCC BAA-125 / DSM 18197 / FERM 7344 / JCM 9153 / C-125) (Bacillus halodurans).